A 202-amino-acid chain; its full sequence is B-cell CLL/lymphoma 7 protein family member B (202 aa).

The disordered stretch occupies residues 53–202 (DSKEKEKSKS…PAVPQTASES (150 aa)). A compositionally biased stretch (polar residues) spans 90 to 99 (ENSNQSSVSD). A compositionally biased stretch (low complexity) spans 107–123 (SSTNSSPSPQQSESLSP). Residues serine 114, serine 118, serine 120, serine 122, serine 127, serine 148, and serine 152 each carry the phosphoserine modification.

It belongs to the BCL7 family.

Positive regulator of apoptosis. Plays a role in the Wnt signaling pathway, negatively regulating the expression of Wnt signaling components CTNNB1 and HMGA1. Involved in cell cycle progression, maintenance of the nuclear structure and stem cell differentiation. May play a role in lung tumor development or progression. This is B-cell CLL/lymphoma 7 protein family member B (BCL7B) from Bos taurus (Bovine).